Reading from the N-terminus, the 165-residue chain is uncharacterized protein (165 aa).

Residues 7 to 29 (YPLIFTAFLLIAFCLIFFSYHLI) traverse the membrane as a helical segment.

It is found in the membrane. This is an uncharacterized protein from Bacillus subtilis (strain 168).